The sequence spans 405 residues: Phosphopentomutase (405 aa).

The Mn(2+) site is built by Asp-10, Asp-303, His-308, Asp-344, His-345, and His-356.

Belongs to the phosphopentomutase family. Requires Mn(2+) as cofactor.

The protein resides in the cytoplasm. The enzyme catalyses 2-deoxy-alpha-D-ribose 1-phosphate = 2-deoxy-D-ribose 5-phosphate. It carries out the reaction alpha-D-ribose 1-phosphate = D-ribose 5-phosphate. The protein operates within carbohydrate degradation; 2-deoxy-D-ribose 1-phosphate degradation; D-glyceraldehyde 3-phosphate and acetaldehyde from 2-deoxy-alpha-D-ribose 1-phosphate: step 1/2. Functionally, isomerase that catalyzes the conversion of deoxy-ribose 1-phosphate (dRib-1-P) and ribose 1-phosphate (Rib-1-P) to deoxy-ribose 5-phosphate (dRib-5-P) and ribose 5-phosphate (Rib-5-P), respectively. The chain is Phosphopentomutase from Shewanella woodyi (strain ATCC 51908 / MS32).